The chain runs to 489 residues: Ent-kaurenoic acid oxidase 2 (489 aa).

The chain crosses the membrane as a helical span at residues 5-25; the sequence is GLILMWFPLIILGLFVLKWVL. A heme-binding site is contributed by C436.

The protein belongs to the cytochrome P450 family. Requires heme as cofactor. Widely expressed. Highly expressed in influorescence stem, influorescence, and silique tissue. Weakly expressed in cauline and rosette leaves. Expressed at a weaker level in stem and influorescence than AtKAO1/CYP88A3.

Its subcellular location is the endoplasmic reticulum membrane. It catalyses the reaction ent-kaur-16-en-19-oate + 3 reduced [NADPH--hemoprotein reductase] + 3 O2 = gibberellin A12 + 3 oxidized [NADPH--hemoprotein reductase] + 4 H2O + 4 H(+). The catalysed reaction is ent-kaur-16-en-19-oate + reduced [NADPH--hemoprotein reductase] + O2 = ent-7alpha-hydroxykaur-16-en-19-oate + oxidized [NADPH--hemoprotein reductase] + H2O + H(+). The enzyme catalyses ent-7alpha-hydroxykaur-16-en-19-oate + reduced [NADPH--hemoprotein reductase] + O2 = gibberellin A12 aldehyde + oxidized [NADPH--hemoprotein reductase] + 2 H2O + H(+). It carries out the reaction gibberellin A12 aldehyde + reduced [NADPH--hemoprotein reductase] + O2 = gibberellin A12 + oxidized [NADPH--hemoprotein reductase] + H2O + 2 H(+). Its pathway is plant hormone biosynthesis; gibberellin biosynthesis. In terms of biological role, catalyzes three successive oxidations of ent-kaurenoic acid giving gibberellin 12 (GA12), a key step in gibberellins (GAs) biosynthesis. GAs, which are involved many processes, including stem elongation, play a central role in plant development. This is Ent-kaurenoic acid oxidase 2 from Arabidopsis thaliana (Mouse-ear cress).